Consider the following 341-residue polypeptide: Phosphoribosylformylglycinamidine cyclo-ligase (341 aa).

Belongs to the AIR synthase family.

Its subcellular location is the cytoplasm. It catalyses the reaction 2-formamido-N(1)-(5-O-phospho-beta-D-ribosyl)acetamidine + ATP = 5-amino-1-(5-phospho-beta-D-ribosyl)imidazole + ADP + phosphate + H(+). It participates in purine metabolism; IMP biosynthesis via de novo pathway; 5-amino-1-(5-phospho-D-ribosyl)imidazole from N(2)-formyl-N(1)-(5-phospho-D-ribosyl)glycinamide: step 2/2. In Xanthomonas oryzae pv. oryzae (strain MAFF 311018), this protein is Phosphoribosylformylglycinamidine cyclo-ligase.